Reading from the N-terminus, the 498-residue chain is Glutathione synthetase large chain (498 aa).

Arg128 is a substrate binding site. Glu146 provides a ligand contact to ATP. Mg(2+) contacts are provided by Glu146 and Asn148. Residues 150–153 (ISVS), 233–235 (ERN), Gln239, and 291–294 (RVGY) each bind substrate. Lys330 is an ATP binding site. Ser356 is subject to Phosphoserine. ATP-binding positions include 387–396 (KPQREGGGNN), Tyr398, 420–423 (MRYI), and Glu446. Position 391 (Glu391) interacts with Mg(2+). Residue Arg473 coordinates substrate. Positions 475 and 481 each coordinate ATP. 484-485 (VA) is a substrate binding site.

This sequence belongs to the eukaryotic GSH synthase family. As to quaternary structure, heterodimer composed of a large and a small chain. It depends on Mg(2+) as a cofactor.

The catalysed reaction is gamma-L-glutamyl-L-cysteine + glycine + ATP = glutathione + ADP + phosphate + H(+). It functions in the pathway sulfur metabolism; glutathione biosynthesis; glutathione from L-cysteine and L-glutamate: step 2/2. The polypeptide is Glutathione synthetase large chain (gsa1) (Schizosaccharomyces pombe (strain 972 / ATCC 24843) (Fission yeast)).